The sequence spans 306 residues: Porphobilinogen deaminase (306 aa).

C239 bears the S-(dipyrrolylmethanemethyl)cysteine mark.

The protein belongs to the HMBS family. As to quaternary structure, monomer. Dipyrromethane serves as cofactor.

The catalysed reaction is 4 porphobilinogen + H2O = hydroxymethylbilane + 4 NH4(+). The protein operates within porphyrin-containing compound metabolism; protoporphyrin-IX biosynthesis; coproporphyrinogen-III from 5-aminolevulinate: step 2/4. In terms of biological role, tetrapolymerization of the monopyrrole PBG into the hydroxymethylbilane pre-uroporphyrinogen in several discrete steps. This chain is Porphobilinogen deaminase (hemC), found in Helicobacter pylori (strain J99 / ATCC 700824) (Campylobacter pylori J99).